We begin with the raw amino-acid sequence, 214 residues long: Outer-membrane lipoprotein LolB (214 aa).

Positions 1–30 are cleaved as a signal peptide; the sequence is MKHVSSPHPCAAIASARVWLGLVLVALLAG. The N-palmitoyl cysteine moiety is linked to residue Cys31. Cys31 is lipidated: S-diacylglycerol cysteine.

The protein belongs to the LolB family. As to quaternary structure, monomer.

Its subcellular location is the cell outer membrane. Its function is as follows. Plays a critical role in the incorporation of lipoproteins in the outer membrane after they are released by the LolA protein. The protein is Outer-membrane lipoprotein LolB of Chromohalobacter salexigens (strain ATCC BAA-138 / DSM 3043 / CIP 106854 / NCIMB 13768 / 1H11).